Reading from the N-terminus, the 416-residue chain is Tyrosine--tRNA ligase (416 aa).

Tyr-40 contacts L-tyrosine. The short motif at 45 to 54 (ATAASLHVGH) is the 'HIGH' region element. The L-tyrosine site is built by Tyr-177 and Gln-181. The short motif at 237-241 (KMGKS) is the 'KMSKS' region element. Residue Lys-240 participates in ATP binding. The region spanning 351 to 416 (LSVTHFLVAA…RKKHKLVRLA (66 aa)) is the S4 RNA-binding domain.

This sequence belongs to the class-I aminoacyl-tRNA synthetase family. TyrS type 1 subfamily. As to quaternary structure, homodimer.

It is found in the cytoplasm. The catalysed reaction is tRNA(Tyr) + L-tyrosine + ATP = L-tyrosyl-tRNA(Tyr) + AMP + diphosphate + H(+). Catalyzes the attachment of tyrosine to tRNA(Tyr) in a two-step reaction: tyrosine is first activated by ATP to form Tyr-AMP and then transferred to the acceptor end of tRNA(Tyr). The chain is Tyrosine--tRNA ligase from Cereibacter sphaeroides (strain ATCC 17025 / ATH 2.4.3) (Rhodobacter sphaeroides).